Here is a 347-residue protein sequence, read N- to C-terminus: Ferredoxin--NADP reductase 1 (347 aa).

T26, D45, Q53, Y58, V98, F133, D298, and S339 together coordinate FAD.

Belongs to the ferredoxin--NADP reductase type 2 family. In terms of assembly, homodimer. The cofactor is FAD.

It carries out the reaction 2 reduced [2Fe-2S]-[ferredoxin] + NADP(+) + H(+) = 2 oxidized [2Fe-2S]-[ferredoxin] + NADPH. The chain is Ferredoxin--NADP reductase 1 from Chloroherpeton thalassium (strain ATCC 35110 / GB-78).